Here is a 78-residue protein sequence, read N- to C-terminus: MTDSIPKKPLKKGSLVFVDRGNYIKSIEALASDNDLPNYVFEGPGEILSVKDEYAQVRWRRPVPDVWFKLDQLKEYIQ.

Belongs to the complex I NdhO subunit family. In terms of assembly, NDH-1 can be composed of about 15 different subunits; different subcomplexes with different compositions have been identified which probably have different functions.

The protein localises to the cellular thylakoid membrane. It catalyses the reaction a plastoquinone + NADH + (n+1) H(+)(in) = a plastoquinol + NAD(+) + n H(+)(out). The catalysed reaction is a plastoquinone + NADPH + (n+1) H(+)(in) = a plastoquinol + NADP(+) + n H(+)(out). In terms of biological role, NDH-1 shuttles electrons from an unknown electron donor, via FMN and iron-sulfur (Fe-S) centers, to quinones in the respiratory and/or the photosynthetic chain. The immediate electron acceptor for the enzyme in this species is believed to be plastoquinone. Couples the redox reaction to proton translocation, and thus conserves the redox energy in a proton gradient. Cyanobacterial NDH-1 also plays a role in inorganic carbon-concentration. This chain is NAD(P)H-quinone oxidoreductase subunit O, found in Prochlorococcus marinus (strain MIT 9312).